A 270-amino-acid polypeptide reads, in one-letter code: Tryptophan synthase alpha chain (270 aa).

Catalysis depends on proton acceptor residues glutamate 49 and aspartate 60.

It belongs to the TrpA family. As to quaternary structure, tetramer of two alpha and two beta chains.

It catalyses the reaction (1S,2R)-1-C-(indol-3-yl)glycerol 3-phosphate + L-serine = D-glyceraldehyde 3-phosphate + L-tryptophan + H2O. The protein operates within amino-acid biosynthesis; L-tryptophan biosynthesis; L-tryptophan from chorismate: step 5/5. The alpha subunit is responsible for the aldol cleavage of indoleglycerol phosphate to indole and glyceraldehyde 3-phosphate. This chain is Tryptophan synthase alpha chain, found in Buchnera aphidicola subsp. Melaphis rhois.